A 162-amino-acid chain; its full sequence is uncharacterized protein (162 aa).

A signal peptide spans 1–24 (MCKRFKFLLAVSALFISITVVLAG). Cys25 carries N-palmitoyl cysteine lipidation. Residue Cys25 is the site of S-diacylglycerol cysteine attachment.

The protein localises to the cell membrane. This is an uncharacterized protein from Bacillus anthracis.